Reading from the N-terminus, the 582-residue chain is Cryptochrome-2 (582 aa).

The Photolyase/cryptochrome alpha/beta domain maps to 12 to 141 (CRSVHWFRRG…EVVIENSHTL (130 aa)). Residues Ser261, Gln298, His364, and 396-398 (DAD) each bind FAD. Residues 521 to 559 (GPVTDSAPGQGSSTSTAVRLPQSDQASPKRKHEGAEELC) form a disordered region. Over residues 527–546 (APGQGSSTSTAVRLPQSDQA) the composition is skewed to polar residues.

This sequence belongs to the DNA photolyase class-1 family. As to quaternary structure, component of the circadian core oscillator, which includes the CRY proteins, CLOCK or NPAS2, BMAL1 or BMAL2, CSNK1E, and the PER proteins. FAD serves as cofactor. Requires (6R)-5,10-methylene-5,6,7,8-tetrahydrofolate as cofactor. Expressed in the pineal gland.

It is found in the cytoplasm. The protein localises to the nucleus. Its function is as follows. Transcriptional repressor which forms a core component of the circadian clock. The circadian clock, an internal time-keeping system, regulates various physiological processes through the generation of approximately 24 hour circadian rhythms in gene expression, which are translated into rhythms in metabolism and behavior. It is derived from the Latin roots 'circa' (about) and 'diem' (day) and acts as an important regulator of a wide array of physiological functions including metabolism, sleep, body temperature, blood pressure, endocrine, immune, cardiovascular, and renal function. Consists of two major components: the central clock, residing in the suprachiasmatic nucleus (SCN) of the brain, and the peripheral clocks that are present in nearly every tissue and organ system. Both the central and peripheral clocks can be reset by environmental cues, also known as Zeitgebers (German for 'timegivers'). The predominant Zeitgeber for the central clock is light, which is sensed by retina and signals directly to the SCN. The central clock entrains the peripheral clocks through neuronal and hormonal signals, body temperature and feeding-related cues, aligning all clocks with the external light/dark cycle. Circadian rhythms allow an organism to achieve temporal homeostasis with its environment at the molecular level by regulating gene expression to create a peak of protein expression once every 24 hours to control when a particular physiological process is most active with respect to the solar day. Transcription and translation of core clock components (CLOCK, NPAS2, BMAL1, BMAL2, PER1, PER2, PER3, CRY1 and CRY2) plays a critical role in rhythm generation, whereas delays imposed by post-translational modifications (PTMs) are important for determining the period (tau) of the rhythms (tau refers to the period of a rhythm and is the length, in time, of one complete cycle). A diurnal rhythm is synchronized with the day/night cycle, while the ultradian and infradian rhythms have a period shorter and longer than 24 hours, respectively. Disruptions in the circadian rhythms contribute to the pathology of cardiovascular diseases, cancer, metabolic syndromes and aging. A transcription/translation feedback loop (TTFL) forms the core of the molecular circadian clock mechanism. Transcription factors, CLOCK or NPAS2 and BMAL1 or BMAL2, form the positive limb of the feedback loop, act in the form of a heterodimer and activate the transcription of core clock genes and clock-controlled genes (involved in key metabolic processes), harboring E-box elements (5'-CACGTG-3') within their promoters. The core clock genes: PER1/2/3 and CRY1/2 which are transcriptional repressors form the negative limb of the feedback loop and interact with the CLOCK|NPAS2-BMAL1|BMAL2 heterodimer inhibiting its activity and thereby negatively regulating their own expression. This heterodimer also activates nuclear receptors NR1D1/2, RORA/B/G, which form a second feedback loop and which activate and repress BMAL1 transcription, respectively. CRY1 and CRY2 have redundant functions but also differential and selective contributions at least in defining the pace of the SCN circadian clock and its circadian transcriptional outputs. Less potent transcriptional repressor in cerebellum and liver than CRY1, though less effective in lengthening the period of the SCN oscillator. Seems to play a critical role in tuning SCN circadian period by opposing the action of CRY1. With CRY1, dispensable for circadian rhythm generation but necessary for the development of intercellular networks for rhythm synchrony. Represses CLOCK-BMAL1-mediated transcriptional activation. This Gallus gallus (Chicken) protein is Cryptochrome-2 (CRY2).